We begin with the raw amino-acid sequence, 282 residues long: Succinate dehydrogenase [ubiquinone] iron-sulfur subunit, mitochondrial (282 aa).

One can recognise a 2Fe-2S ferredoxin-type domain in the interval tyrosine 43 to methionine 131. Positions 91, 96, 99, and 111 each coordinate [2Fe-2S] cluster. The 31-residue stretch at glutamate 174–tyrosine 204 folds into the 4Fe-4S ferredoxin-type domain. Residues cysteine 184, cysteine 187, and cysteine 190 each contribute to the [4Fe-4S] cluster site. A [3Fe-4S] cluster-binding site is contributed by cysteine 194. Tryptophan 199 serves as a coordination point for a ubiquinone. Cysteine 241 and cysteine 247 together coordinate [3Fe-4S] cluster. Cysteine 251 is a binding site for [4Fe-4S] cluster.

Belongs to the succinate dehydrogenase/fumarate reductase iron-sulfur protein family. Component of complex II composed of four subunits: a flavoprotein (FP), an iron-sulfur protein (IP), and a cytochrome b composed of a large and a small subunit. [2Fe-2S] cluster is required as a cofactor. Requires [3Fe-4S] cluster as cofactor. It depends on [4Fe-4S] cluster as a cofactor.

It is found in the mitochondrion inner membrane. The enzyme catalyses a quinone + succinate = fumarate + a quinol. It participates in carbohydrate metabolism; tricarboxylic acid cycle; fumarate from succinate (eukaryal route): step 1/1. In terms of biological role, iron-sulfur protein (IP) subunit of succinate dehydrogenase (SDH) that is involved in complex II of the mitochondrial electron transport chain and is responsible for transferring electrons from succinate to ubiquinone (coenzyme Q). The protein is Succinate dehydrogenase [ubiquinone] iron-sulfur subunit, mitochondrial of Caenorhabditis briggsae.